Reading from the N-terminus, the 177-residue chain is Large ribosomal subunit protein uL6 (177 aa).

This sequence belongs to the universal ribosomal protein uL6 family. In terms of assembly, part of the 50S ribosomal subunit.

Its function is as follows. This protein binds to the 23S rRNA, and is important in its secondary structure. It is located near the subunit interface in the base of the L7/L12 stalk, and near the tRNA binding site of the peptidyltransferase center. The sequence is that of Large ribosomal subunit protein uL6 from Cupriavidus taiwanensis (strain DSM 17343 / BCRC 17206 / CCUG 44338 / CIP 107171 / LMG 19424 / R1) (Ralstonia taiwanensis (strain LMG 19424)).